The chain runs to 96 residues: Small ribosomal subunit protein bS6 (96 aa).

The protein belongs to the bacterial ribosomal protein bS6 family.

In terms of biological role, binds together with bS18 to 16S ribosomal RNA. This is Small ribosomal subunit protein bS6 from Mycolicibacterium paratuberculosis (strain ATCC BAA-968 / K-10) (Mycobacterium paratuberculosis).